The primary structure comprises 146 residues: UPF0735 ACT domain-containing protein TTE2621 (146 aa).

The ACT domain maps to 71–146; sequence TFSMVLEHMP…GVRKIEVLGE (76 aa).

This sequence belongs to the UPF0735 family.

In Caldanaerobacter subterraneus subsp. tengcongensis (strain DSM 15242 / JCM 11007 / NBRC 100824 / MB4) (Thermoanaerobacter tengcongensis), this protein is UPF0735 ACT domain-containing protein TTE2621.